Consider the following 374-residue polypeptide: Cobalt-precorrin-5B C(1)-methyltransferase (374 aa).

This sequence belongs to the CbiD family.

The enzyme catalyses Co-precorrin-5B + S-adenosyl-L-methionine = Co-precorrin-6A + S-adenosyl-L-homocysteine. Its pathway is cofactor biosynthesis; adenosylcobalamin biosynthesis; cob(II)yrinate a,c-diamide from sirohydrochlorin (anaerobic route): step 6/10. Catalyzes the methylation of C-1 in cobalt-precorrin-5B to form cobalt-precorrin-6A. The chain is Cobalt-precorrin-5B C(1)-methyltransferase from Synechococcus elongatus (strain ATCC 33912 / PCC 7942 / FACHB-805) (Anacystis nidulans R2).